The sequence spans 203 residues: Small ribosomal subunit protein uS4 (203 aa).

Positions 93–156 constitute an S4 RNA-binding domain; that stretch reads TRLDNLVFRL…QNLAIVNEAI (64 aa).

It belongs to the universal ribosomal protein uS4 family. In terms of assembly, part of the 30S ribosomal subunit. Contacts protein S5. The interaction surface between S4 and S5 is involved in control of translational fidelity.

Functionally, one of the primary rRNA binding proteins, it binds directly to 16S rRNA where it nucleates assembly of the body of the 30S subunit. With S5 and S12 plays an important role in translational accuracy. In Lacticaseibacillus casei (strain BL23) (Lactobacillus casei), this protein is Small ribosomal subunit protein uS4.